The sequence spans 962 residues: Thrombospondin-3a (962 aa).

An N-terminal signal peptide occupies residues 1–23 (MEQMFVHIWVSLVVLMSVWSAQS). Residues 24–196 (DKKQDVPVID…MDTLKLALGG (173 aa)) enclose the Laminin G-like domain. In terms of domain architecture, EGF-like 1 spans 277 to 318 (PRSRCQPNPCFKGVSCMETFEYPGYRCGPCPDGMTGNGTHCQ). Intrachain disulfides connect Cys281–Cys292, Cys286–Cys303, Cys306–Cys317, Cys323–Cys335, Cys329–Cys344, Cys347–Cys371, Cys377–Cys390, Cys384–Cys399, Cys402–Cys414, Cys420–Cys434, Cys428–Cys444, Cys446–Cys457, Cys473–Cys480, Cys485–Cys505, Cys521–Cys541, Cys544–Cys564, Cys580–Cys600, Cys603–Cys623, Cys641–Cys661, and Cys684–Cys704. N-linked (GlcNAc...) asparagine glycosylation is present at Asn313. An EGF-like 2; calcium-binding domain is found at 319 to 358 (DIDECSEAQPCYTPGACVNTARGFTCESCPPGMWGPPLSG). The EGF-like 3; calcium-binding domain maps to 373-412 (DIDECVDLANACTPNSVCINIIGSFRCGQCKTGYVGNQTA). An N-linked (GlcNAc...) asparagine glycan is attached at Asn409. Residues 416 to 458 (PRKSCSSLSFNPCDANAHCVMQRNGDVSCACNVGWAGNGHTCG) enclose the EGF-like 4 domain. 8 TSP type-3 repeats span residues 459–493 (KDTD…NSGQ), 494–529 (EDAD…NKDQ), 530–552 (QNSD…NIDQ), 553–588 (KDTD…NPMQ), 589–611 (TDRD…NPMQ), 612–649 (TDVD…NSSQ), 650–692 (LDSD…NPNQ), and 693–728 (KDSD…EVTL). The segment at 548 to 704 (PNIDQKDTDS…SDSNGVGDVC (157 aa)) is disordered. Acidic residues predominate over residues 557–570 (SNGEGDACDDDIDG). Over residues 631–641 (GDGHQDTRDNC) the composition is skewed to basic and acidic residues. Asn646 carries N-linked (GlcNAc...) asparagine glycosylation. A compositionally biased stretch (acidic residues) spans 652-669 (SDNDGIGDDCDEDDDNDG). Asn710 is a glycosylation site (N-linked (GlcNAc...) asparagine). Residues Cys720 and Cys941 are joined by a disulfide bond. In terms of domain architecture, TSP C-terminal spans 732–946 (RAYQTVILDP…LRYRCNDTVP (215 aa)). Residue Asn942 is glycosylated (N-linked (GlcNAc...) asparagine).

Belongs to the thrombospondin family. Oligomer; disulfide-linked.

Its function is as follows. Adhesive glycoprotein that mediates cell-to-cell and cell-to-matrix interactions. Can bind to fibrinogen, fibronectin, laminin and type V collagen. This Danio rerio (Zebrafish) protein is Thrombospondin-3a (thbs3a).